The primary structure comprises 264 residues: Thymidylate synthase (264 aa).

Position 21 (R21) interacts with dUMP. A (6R)-5,10-methylene-5,6,7,8-tetrahydrofolate-binding site is contributed by H51. Residue 126–127 (RR) participates in dUMP binding. C146 acts as the Nucleophile in catalysis. DUMP-binding positions include 166 to 169 (RSAD), N177, and 207 to 209 (HIY). D169 provides a ligand contact to (6R)-5,10-methylene-5,6,7,8-tetrahydrofolate. A263 serves as a coordination point for (6R)-5,10-methylene-5,6,7,8-tetrahydrofolate.

Belongs to the thymidylate synthase family. Bacterial-type ThyA subfamily. As to quaternary structure, homodimer.

The protein localises to the cytoplasm. It catalyses the reaction dUMP + (6R)-5,10-methylene-5,6,7,8-tetrahydrofolate = 7,8-dihydrofolate + dTMP. It functions in the pathway pyrimidine metabolism; dTTP biosynthesis. In terms of biological role, catalyzes the reductive methylation of 2'-deoxyuridine-5'-monophosphate (dUMP) to 2'-deoxythymidine-5'-monophosphate (dTMP) while utilizing 5,10-methylenetetrahydrofolate (mTHF) as the methyl donor and reductant in the reaction, yielding dihydrofolate (DHF) as a by-product. This enzymatic reaction provides an intracellular de novo source of dTMP, an essential precursor for DNA biosynthesis. The polypeptide is Thymidylate synthase (Agrobacterium fabrum (strain C58 / ATCC 33970) (Agrobacterium tumefaciens (strain C58))).